The following is a 929-amino-acid chain: Protocadherin gamma-B7 (929 aa).

The first 30 residues, 1–30 (MGGSCAQRRRAGPRQVLFPLLLPLFYPTLC), serve as a signal peptide directing secretion. Cadherin domains follow at residues 31 to 133 (EPIR…APQF), 134 to 242 (RKDE…PPVF), 243 to 347 (SQDV…SPEI), 348 to 452 (IITS…APVF), 453 to 562 (GQSA…APRV), and 570 to 675 (DGSA…LPDF). Residues 31–691 (EPIRYSIPEE…SDSQAEMQFY (661 aa)) lie on the Extracellular side of the membrane. N-linked (GlcNAc...) asparagine glycosylation is found at N419 and N545. The helical transmembrane segment at 692-712 (LVVALALISVLFLLAVILAIA) threads the bilayer. Over 713–929 (LRLRQSFSPT…KKKSGKKEKK (217 aa)) the chain is Cytoplasmic. Disordered regions lie at residues 806 to 838 (QAPPNTDWRFSQAQRPGTSGSQNGDDTGTWPNN) and 899 to 929 (ATLTNAAGKRDGKAPAGGNGNKKKSGKKEKK). A compositionally biased stretch (polar residues) spans 807 to 838 (APPNTDWRFSQAQRPGTSGSQNGDDTGTWPNN). Over residues 919 to 929 (NKKKSGKKEKK) the composition is skewed to basic residues.

Its subcellular location is the cell membrane. Potential calcium-dependent cell-adhesion protein. May be involved in the establishment and maintenance of specific neuronal connections in the brain. The polypeptide is Protocadherin gamma-B7 (PCDHGB7) (Homo sapiens (Human)).